The following is a 346-amino-acid chain: Transcription termination factor 4, mitochondrial (346 aa).

Residues 1–42 constitute a mitochondrion transit peptide; the sequence is MASLGRQVPEWHRLLALSWACLVRQTPHLREQKQMSPSLSCK. MTERF repeat units lie at residues 142–172, 177–204, 209–239, 245–270, and 290–318; these read FNAL…LGLG, KRVL…LREK, AQHI…YAYF, HLDI…YLER, and LRNI…VFKK. The tract at residues 310 to 327 is dimerization with NSUN4; it reads VEEFQVFKKLLDQEEEEE. The tract at residues 321 to 346 is disordered; that stretch reads DQEEEEESESHASEEEEEEEEEEELL. The segment covering 322-346 has biased composition (acidic residues); the sequence is QEEEEESESHASEEEEEEEEEEELL.

It belongs to the mTERF family. Heterodimer with NSUN4; this interaction may be required for NSUN4 recruitment to the mitochondrial large ribosomal subunit. Widely expressed, with highest levels in liver, followed by testis, kidney and brain.

Its subcellular location is the mitochondrion. Functionally, regulator of mitochondrial ribosome biogenesis and translation. Binds to mitochondrial ribosomal RNAs 16S, 12S and 7S. Targets NSUN4 RNA methyltransferase to the mitochondrial large ribosomal subunit. This chain is Transcription termination factor 4, mitochondrial (Mterf4), found in Mus musculus (Mouse).